We begin with the raw amino-acid sequence, 397 residues long: Ribosomal RNA large subunit methyltransferase I (397 aa).

The PUA domain maps to 2–79 (TAAIYLVKGR…KEEINKAFFV (78 aa)).

Belongs to the methyltransferase superfamily. RlmI family.

It is found in the cytoplasm. It catalyses the reaction cytidine(1962) in 23S rRNA + S-adenosyl-L-methionine = 5-methylcytidine(1962) in 23S rRNA + S-adenosyl-L-homocysteine + H(+). Its function is as follows. Specifically methylates the cytosine at position 1962 (m5C1962) of 23S rRNA. This Vibrio campbellii (strain ATCC BAA-1116) protein is Ribosomal RNA large subunit methyltransferase I.